A 183-amino-acid polypeptide reads, in one-letter code: Threonylcarbamoyl-AMP synthase (183 aa).

In terms of domain architecture, YrdC-like spans 1 to 183; it reads MNIQQIVEQL…LFTHQLFRQG (183 aa).

Belongs to the SUA5 family. TsaC subfamily.

The protein resides in the cytoplasm. The catalysed reaction is L-threonine + hydrogencarbonate + ATP = L-threonylcarbamoyladenylate + diphosphate + H2O. Required for the formation of a threonylcarbamoyl group on adenosine at position 37 (t(6)A37) in tRNAs that read codons beginning with adenine. Catalyzes the conversion of L-threonine, HCO(3)(-)/CO(2) and ATP to give threonylcarbamoyl-AMP (TC-AMP) as the acyladenylate intermediate, with the release of diphosphate. The chain is Threonylcarbamoyl-AMP synthase from Pasteurella multocida (strain Pm70).